We begin with the raw amino-acid sequence, 891 residues long: DNA mismatch repair protein MutS (891 aa).

Residue 643–650 (GPNMGGKS) coordinates ATP.

Belongs to the DNA mismatch repair MutS family.

This protein is involved in the repair of mismatches in DNA. It is possible that it carries out the mismatch recognition step. This protein has a weak ATPase activity. The polypeptide is DNA mismatch repair protein MutS (Xanthomonas campestris pv. campestris (strain ATCC 33913 / DSM 3586 / NCPPB 528 / LMG 568 / P 25)).